Consider the following 443-residue polypeptide: Xaa-Pro dipeptidase (443 aa).

Mn(2+)-binding residues include aspartate 246, aspartate 257, histidine 339, glutamate 384, and glutamate 423.

It belongs to the peptidase M24B family. Bacterial-type prolidase subfamily. Mn(2+) is required as a cofactor.

The enzyme catalyses Xaa-L-Pro dipeptide + H2O = an L-alpha-amino acid + L-proline. Its function is as follows. Splits dipeptides with a prolyl residue in the C-terminal position. This is Xaa-Pro dipeptidase from Escherichia fergusonii (strain ATCC 35469 / DSM 13698 / CCUG 18766 / IAM 14443 / JCM 21226 / LMG 7866 / NBRC 102419 / NCTC 12128 / CDC 0568-73).